The sequence spans 942 residues: MTQLASSYDPKSFETDLYEAWEKAGHFKPSGTGEPYTILLPPPNVTGTLHMGHAFQQTLMDALVRYHRMRGYDTLWQVGTDHAGIATEMVVSRNLALEGKGETRDSLGREGFIGKVWEWKQQSGDTIERQMRRLGTSADWSRSTFTMDPQPSAAVNEAFVRWYEQGLIYRGQRLVNWDPVLKTAISDLEVESAEEDGFLWSIAYTLDEGLSYEHVERDADGVETLRETRDYLVVATTRPETLLGDTAVMVHPEDKRYAHLIGKSVVLPLTGRRVPVIADDYVDRAFGTGVVKVTPAHDFNDYEVGVRHSLPMINLFTPVAALNENAPERFQGLDRYAARKAVLAELEDLGILVETKAHKLQVPRGDRTGQVIEPYLTDQWFVKMDDLAKRGLELVEDGSISFVPPNWINTYRHWMNNIQDWCISRQLWWGHRIPAWFDEATGSCYVGRSEEEVRAKHNLGSDVVLNQESDVLETWFSSQLWPFSTLGWPNEQAMAERGFDRYLPSSVLITGFDIIFFWVARMIMATDNLVGKIPFKDVYFTGLIRDGQGQKMSKSKGNVLDPLDIIDGITIDDLVAKRTGGLMQPKMVEKIEKATRKEFPDGIAAHGADALRFTIAALATHGRDIKFDMNRAEGYKNFCNKLWNASRFALMNTEGAAFTGVPRPRTDAERWILARLAATTAEAQGHFAAYRFDLLAQCLYEFAWNAFCDWFLELSKPALNGADAADAESTRHTLLYVLEALLRLLHPLTPFITEQLWQQLAPRLGLAETTLSLRPYPTAAEFEGDFAQAEADVEWLKAVISAVRRVRSELNVAPSKLVPLRLQAGLEQDRVRIERFSASLSFLLKLDSIQWLAEGESAPPAAAAIVGELKLLVPLEGLVDLDAERVRLDKEIARVEAEKEKSETKLAKFTDKVPPAVVEQERVRLADWNTQLAGLREQRAKL.

The short motif at 43–53 (PNVTGTLHMGH) is the 'HIGH' region element. A 'KMSKS' region motif is present at residues 551–555 (KMSKS). Lys-554 serves as a coordination point for ATP. A coiled-coil region spans residues 876-942 (EGLVDLDAER…AGLREQRAKL (67 aa)).

This sequence belongs to the class-I aminoacyl-tRNA synthetase family. ValS type 1 subfamily. As to quaternary structure, monomer.

The protein resides in the cytoplasm. The enzyme catalyses tRNA(Val) + L-valine + ATP = L-valyl-tRNA(Val) + AMP + diphosphate. In terms of biological role, catalyzes the attachment of valine to tRNA(Val). As ValRS can inadvertently accommodate and process structurally similar amino acids such as threonine, to avoid such errors, it has a 'posttransfer' editing activity that hydrolyzes mischarged Thr-tRNA(Val) in a tRNA-dependent manner. This chain is Valine--tRNA ligase, found in Stenotrophomonas maltophilia (strain K279a).